Consider the following 464-residue polypeptide: UDP-glucose:undecaprenyl-phosphate glucose-1-phosphate transferase (464 aa).

The Cytoplasmic portion of the chain corresponds to 1–15 (MTNLKKRERAKTNAS). A helical transmembrane segment spans residues 16 to 36 (LISMVQRFSDITIMFAGLWLV). Residues 37 to 38 (CE) are Periplasmic-facing. Residues 39-59 (VSGLSFLYMHLLVALITLVVF) form a helical membrane-spanning segment. At 60–80 (QMLGGITDFYRSWRGVRAATE) the chain is on the cytoplasmic side. Residues 81-101 (FALLLQNWTLSVIFSAGLVAF) traverse the membrane as a helical segment. At 102–104 (NND) the chain is on the periplasmic side. A helical membrane pass occupies residues 105-125 (FDTQLKIWLAWYALTSIGLVV). Topologically, residues 126–278 (CRSCIRIGAG…VNRLLKRAED (153 aa)) are cytoplasmic. The helical transmembrane segment at 279-299 (IVLATLILLLISPVLCCIALA) threads the bilayer. The Periplasmic segment spans residues 300-464 (VKLSSPGPVI…FKGFVNKAAY (165 aa)).

The protein belongs to the bacterial sugar transferase family.

The protein localises to the cell inner membrane. The enzyme catalyses di-trans,octa-cis-undecaprenyl phosphate + UDP-alpha-D-glucose = alpha-D-glucosyl di-trans,octa-cis-undecaprenyl diphosphate + UMP. It functions in the pathway exopolysaccharide biosynthesis; colanic acid biosynthesis. Its function is as follows. Is the initiating enzyme for colanic acid (CA) synthesis. Catalyzes the transfer of the glucose-1-phosphate moiety from UDP-Glc onto the carrier lipid undecaprenyl phosphate (C55-P), forming a phosphoanhydride bond yielding to glucosyl-pyrophosphoryl-undecaprenol (Glc-PP-C55). Also possesses a weak galactose-1-P transferase activity. The chain is UDP-glucose:undecaprenyl-phosphate glucose-1-phosphate transferase (wcaJ) from Escherichia coli (strain K12).